We begin with the raw amino-acid sequence, 107 residues long: MTFVVTDNCIKCKYTDCVEVCPVDCFYEGPNFLVIHPDECIDCALCEPECPAQAIFSEDEVPENMQEFIELNSELAEVWPNITEKKDALPDAEEWDGVAGKLQHLER.

4Fe-4S ferredoxin-type domains lie at 2-30 (TFVV…YEGP) and 31-60 (NFLV…SEDE). The [3Fe-4S] cluster site is built by Cys9 and Cys17. [4Fe-4S] cluster contacts are provided by Cys21, Cys40, Cys43, and Cys46. Cys50 lines the [3Fe-4S] cluster pocket.

It depends on [4Fe-4S] cluster as a cofactor. [3Fe-4S] cluster serves as cofactor.

Its function is as follows. Ferredoxins are iron-sulfur proteins that transfer electrons in a wide variety of metabolic reactions. This is Ferredoxin 1 (fdxA) from Pseudomonas aeruginosa (strain ATCC 15692 / DSM 22644 / CIP 104116 / JCM 14847 / LMG 12228 / 1C / PRS 101 / PAO1).